A 396-amino-acid polypeptide reads, in one-letter code: GTPase Obg (396 aa).

One can recognise an Obg domain in the interval 1 to 159; the sequence is MKFVDEATIY…RNIRLELKVL (159 aa). In terms of domain architecture, OBG-type G spans 160–333; that stretch reads ADVGLLGLPN…LCQDIMTWIE (174 aa). GTP is bound by residues 166–173, 191–195, 213–216, 283–286, and 314–316; these read GLPNAGKS, FTTLV, DIPG, NKTD, and SAL. The Mg(2+) site is built by S173 and T193. Disordered stretches follow at residues 337–356 and 373–396; these read EEER…REQM and LARK…FYAP. The segment covering 347–356 has biased composition (basic and acidic residues); sequence EADRLNREQM. A compositionally biased stretch (acidic residues) spans 381–396; the sequence is SDDDDDDEDVEVFYAP.

This sequence belongs to the TRAFAC class OBG-HflX-like GTPase superfamily. OBG GTPase family. As to quaternary structure, monomer. Requires Mg(2+) as cofactor.

The protein resides in the cytoplasm. In terms of biological role, an essential GTPase which binds GTP, GDP and possibly (p)ppGpp with moderate affinity, with high nucleotide exchange rates and a fairly low GTP hydrolysis rate. Plays a role in control of the cell cycle, stress response, ribosome biogenesis and in those bacteria that undergo differentiation, in morphogenesis control. The sequence is that of GTPase Obg from Hahella chejuensis (strain KCTC 2396).